Here is a 120-residue protein sequence, read N- to C-terminus: UPF0231 protein YacL (120 aa).

It belongs to the UPF0231 family.

This chain is UPF0231 protein YacL, found in Salmonella paratyphi A (strain ATCC 9150 / SARB42).